The sequence spans 430 residues: Leucoanthocyanidin dioxygenase (430 aa).

The 100-residue stretch at 212–311 (LLLQMKINYY…RFSWAIFCEP (100 aa)) folds into the Fe2OG dioxygenase domain. Fe cation is bound by residues histidine 236, aspartate 238, and histidine 292. 2 stretches are compositionally biased toward basic and acidic residues: residues 376–407 (KKDNQDAVAENKDIKEDEQCGPAEHKDIKEDG) and 415–430 (KVFKENNQDVAAEESK). A disordered region spans residues 376 to 430 (KKDNQDAVAENKDIKEDEQCGPAEHKDIKEDGQGAAAENKVFKENNQDVAAEESK).

This sequence belongs to the iron/ascorbate-dependent oxidoreductase family. The cofactor is Fe cation. L-ascorbate serves as cofactor. Predominantly expressed in corollas and at lower levels in anthers.

The enzyme catalyses a (2R,3S,4S)-leucoanthocyanidin + 2-oxoglutarate + O2 = a 4-H-anthocyanidin with a 3-hydroxy group + succinate + CO2 + 2 H2O. It participates in pigment biosynthesis; anthocyanin biosynthesis. Oxidation of leucoanthocyanidins into anthocyanidins. The polypeptide is Leucoanthocyanidin dioxygenase (ANT17) (Petunia hybrida (Petunia)).